We begin with the raw amino-acid sequence, 750 residues long: MDPLMAVLCLLPLYPGLATAALSCPKNVNISGGSFTLSNGWNPGSILTYSCPLGHYPYPVVTRLCKSNGQWQIPRSTRSTKAICKPVRCPAPVSFENGVYIPRLGSHPVGGNLSFECEDGFTLRGSAVRQCRPNGMWDGETAVCDNGASHCPNPGISVGAVRTGSRFGLGDKVRYRCSSNLVLTGSAERECQDDGVWSGTEAICRQPYSYDFPEDVAPALGTSFSHLLATTNPIQQKKKQNLGRKIQIQRSGHLNLYLLLDASQSVSKDDFEIFKDSASRMVDRIFSFEIKVSVAIITFASKPKIIMSVLEDRSRDVTEVENSLRNINYKDHENGTGTNIYEALHAVYIMMNNQMNRPHMNPGAWQEIRHAIILLTDGKSNMGGSPKVAVDNIKEVLNINQKRKDYLDIYAIGVGSLHVDWKELNNLGSKKDGERHAFILKDVQALSQVFEHMLDVSQLTDPICGVGNMSANASAQERTPWHVTIKPKSQETCRGALISDQWVLTAAHCFRNAEDRTLWRVSVGDPNFQGSKEFQIEEAVISPGFNVFSKKSQGIPEFYGDDIALLKLTQKVKMSTHARPICLPCTVGANLALRKLPGSTCRDHEKELLNQVSIPAHFVALNGDKLNINLKTGSEWTNCVKVVLKDKTTFPNLTDVREVVTDQFLCSGTQGDDSPCKGESGGAVFLERRLRFFQVGLVSWGLYNPCGGSSKNSRKPAPHGKVPRDFHINLFRLQPWLRQHLEGILNFVPL.

An N-terminal signal peptide occupies residues 1–20; the sequence is MDPLMAVLCLLPLYPGLATA. 3 consecutive Sushi domains span residues 22–86, 87–146, and 149–206; these read LSCP…ICKP, VRCP…VCDN, and SHCP…ICRQ. Disulfide bonds link cysteine 24/cysteine 65, cysteine 51/cysteine 84, cysteine 89/cysteine 131, cysteine 117/cysteine 144, cysteine 151/cysteine 191, and cysteine 177/cysteine 204. N-linked (GlcNAc...) asparagine glycosylation is present at asparagine 29. Asparagine 112 carries N-linked (GlcNAc...) asparagine glycosylation. A VWFA domain is found at 255–453; the sequence is NLYLLLDASQ…QALSQVFEHM (199 aa). Positions 261 to 265 match the MIDAS-like motif motif; the sequence is DASQS. Mg(2+)-binding residues include serine 263 and serine 265. Asparagine 334 carries an N-linked (GlcNAc...) asparagine glycan. Residue threonine 338 participates in Mg(2+) binding. Disulfide bonds link cysteine 464–cysteine 582, cysteine 493–cysteine 509, cysteine 585–cysteine 601, cysteine 639–cysteine 666, and cysteine 676–cysteine 706. The Peptidase S1 domain maps to 465 to 742; sequence GVGNMSANAS…LQPWLRQHLE (278 aa). Asparagine 468 and asparagine 472 each carry an N-linked (GlcNAc...) asparagine glycan. Active-site charge relay system residues include histidine 508 and aspartate 562. N-linked (GlcNAc...) asparagine glycosylation occurs at asparagine 652. The Charge relay system role is filled by serine 680.

It belongs to the peptidase S1 family. As to quaternary structure, serine protease component of the C3 convertase, also named C4bC2b, composed of the serine protease complement C2b and complement C4b. Serine protease component of the C5 convertase, also named C4bC2bC3b, composed of the serine protease complement C2b, complement C3b, as well as complement C4b. It depends on Mg(2+) as a cofactor. Mn(2+) serves as cofactor. Post-translationally, cleaved and activated by different proteases depending on the complement pathway to generate complement C2a and serine protease complement C2b chains. Cleaved and activated by C1S following activation by the classical complement system. Cleaved and activated by MASP2 following activation by the lectin complement system. Cleaved and activated by GZMK following activation by the GZMK complement system.

It is found in the secreted. Its subcellular location is the cell surface. The catalysed reaction is Selective cleavage of Arg-|-Ser bond in complement component C3 alpha-chain to form C3a and C3b, and Arg-|-Xaa bond in complement component C5 alpha-chain to form C5a and C5b.. Precursor of the catalytic component of the C3 and C5 convertase complexes, which are part of the complement pathway, a cascade of proteins that leads to phagocytosis and breakdown of pathogens and signaling that strengthens the adaptive immune system. Component C2 is part of the classical, lectin and GZMK complement systems. In terms of biological role, catalytic component of the complement C3 and C5 convertase complexes. Following complement activation, recruited to the surface of pathogens by complement C4b opsonin to form the C3 convertase, or C3b and C4b opsonins to form the C5 convertase. As part of the C3 convertase, cleaves and activate C3 into C3a anaphylatoxin and C3b opsonin, the next components of the complement pathways. As part of the C5 convertase, cleaves and activate C5 into C5a anaphylatoxin and C5b component of the membrane attack complex. The sequence is that of Complement C2 (C2) from Bos taurus (Bovine).